Consider the following 460-residue polypeptide: DNA repair protein RadA (460 aa).

The segment at C11–C28 adopts a C4-type zinc-finger fold. G102–S109 serves as a coordination point for ATP. Positions K258–G262 match the RadA KNRFG motif motif. Positions D357–L460 are lon-protease-like.

This sequence belongs to the RecA family. RadA subfamily.

Functionally, DNA-dependent ATPase involved in processing of recombination intermediates, plays a role in repairing DNA breaks. Stimulates the branch migration of RecA-mediated strand transfer reactions, allowing the 3' invading strand to extend heteroduplex DNA faster. Binds ssDNA in the presence of ADP but not other nucleotides, has ATPase activity that is stimulated by ssDNA and various branched DNA structures, but inhibited by SSB. Does not have RecA's homology-searching function. This is DNA repair protein RadA from Salmonella typhimurium (strain LT2 / SGSC1412 / ATCC 700720).